The sequence spans 327 residues: DNA-directed RNA polymerase subunit alpha (327 aa).

Positions 1 to 243 are alpha N-terminal domain (alpha-NTD); the sequence is MEKFLKYEIK…EHLNPIVNVN (243 aa). Residues 260–327 form an alpha C-terminal domain (alpha-CTD) region; that stretch reads RVRSFAKQIE…VHELGLKLRS (68 aa).

The protein belongs to the RNA polymerase alpha chain family. Homodimer. The RNAP catalytic core consists of 2 alpha, 1 beta, 1 beta' and 1 omega subunit. When a sigma factor is associated with the core the holoenzyme is formed, which can initiate transcription.

The enzyme catalyses RNA(n) + a ribonucleoside 5'-triphosphate = RNA(n+1) + diphosphate. Functionally, DNA-dependent RNA polymerase catalyzes the transcription of DNA into RNA using the four ribonucleoside triphosphates as substrates. In Mycoplasma pneumoniae (strain ATCC 29342 / M129 / Subtype 1) (Mycoplasmoides pneumoniae), this protein is DNA-directed RNA polymerase subunit alpha.